The primary structure comprises 110 residues: Small ribosomal subunit protein eS25 (110 aa).

Residues 1–39 (MPPKAAGGKSKQIQASKAAAKGSSGGAGRKKWSKGRSRE) are disordered.

It belongs to the eukaryotic ribosomal protein eS25 family.

This Dictyostelium discoideum (Social amoeba) protein is Small ribosomal subunit protein eS25 (rps25).